Consider the following 64-residue polypeptide: MGNIRQTNIKRIAFQLLENHRDVFTKDFETNKALVTKYTTIESKVIRNRVAGYVTRKVARMKVY.

Belongs to the eukaryotic ribosomal protein eS17 family.

This is Small ribosomal subunit protein eS17 from Methanosarcina barkeri (strain Fusaro / DSM 804).